The primary structure comprises 432 residues: Zinc finger protein 829 (432 aa).

Residues 35–106 enclose the KRAB domain; the sequence is VMFRDVSIDF…DRELTRGLCS (72 aa). A C2H2-type 1 zinc finger spans residues 156 to 178; the sequence is WECKICGKTFNQNSQFIQHQRIH. The C2H2-type 2; degenerate zinc-finger motif lies at 184-206; sequence YESKEYGKSFSRGSLVTRHQRIH. 8 consecutive C2H2-type zinc fingers follow at residues 212–234, 240–262, 268–290, 296–318, 324–346, 352–374, 380–402, and 408–430; these read YECK…QRIH, YECK…LRIH, YECK…QRMH, YECK…HRIH, YECE…QRIH, YECN…QRIH, and YDCK…EGIH.

Belongs to the krueppel C2H2-type zinc-finger protein family.

It is found in the nucleus. May be involved in transcriptional regulation. This chain is Zinc finger protein 829 (ZNF829), found in Homo sapiens (Human).